The primary structure comprises 172 residues: uncharacterized protein (172 aa).

Basic and acidic residues predominate over residues 1 to 17; the sequence is MISLDKDENEIEHHNEE. A disordered region spans residues 1 to 27; the sequence is MISLDKDENEIEHHNEENSLVEQETAP. A helical transmembrane segment spans residues 129–151; the sequence is IVTVLIGIIVAIFVLVVIGIAAF.

The protein resides in the membrane. This is an uncharacterized protein from Bacillus subtilis (strain 168).